The primary structure comprises 827 residues: Valine--tRNA ligase (827 aa).

Residues 41–51 (PNVTGQLHLGH) carry the 'HIGH' region motif. Positions 511 to 515 (KMTKS) match the 'KMSKS' region motif. An ATP-binding site is contributed by Lys-514. The stretch at 765-827 (ENLSKEKAQK…KELLDEKIIE (63 aa)) forms a coiled coil.

This sequence belongs to the class-I aminoacyl-tRNA synthetase family. ValS type 1 subfamily. As to quaternary structure, monomer.

The protein resides in the cytoplasm. It catalyses the reaction tRNA(Val) + L-valine + ATP = L-valyl-tRNA(Val) + AMP + diphosphate. Functionally, catalyzes the attachment of valine to tRNA(Val). As ValRS can inadvertently accommodate and process structurally similar amino acids such as threonine, to avoid such errors, it has a 'posttransfer' editing activity that hydrolyzes mischarged Thr-tRNA(Val) in a tRNA-dependent manner. The polypeptide is Valine--tRNA ligase (Mycoplasmopsis pulmonis (strain UAB CTIP) (Mycoplasma pulmonis)).